Consider the following 500-residue polypeptide: Probable cytosol aminopeptidase (500 aa).

Residues Lys264 and Asp269 each contribute to the Mn(2+) site. Lys276 is a catalytic residue. 3 residues coordinate Mn(2+): Asp287, Asp346, and Glu348. The active site involves Arg350.

This sequence belongs to the peptidase M17 family. The cofactor is Mn(2+).

The protein resides in the cytoplasm. It catalyses the reaction Release of an N-terminal amino acid, Xaa-|-Yaa-, in which Xaa is preferably Leu, but may be other amino acids including Pro although not Arg or Lys, and Yaa may be Pro. Amino acid amides and methyl esters are also readily hydrolyzed, but rates on arylamides are exceedingly low.. It carries out the reaction Release of an N-terminal amino acid, preferentially leucine, but not glutamic or aspartic acids.. In terms of biological role, presumably involved in the processing and regular turnover of intracellular proteins. Catalyzes the removal of unsubstituted N-terminal amino acids from various peptides. This Nitrobacter hamburgensis (strain DSM 10229 / NCIMB 13809 / X14) protein is Probable cytosol aminopeptidase.